The following is a 267-amino-acid chain: Hydroxyethylthiazole kinase (267 aa).

A substrate-binding site is contributed by M46. The ATP site is built by R122 and T168. Residue G195 participates in substrate binding.

This sequence belongs to the Thz kinase family. It depends on Mg(2+) as a cofactor.

The catalysed reaction is 5-(2-hydroxyethyl)-4-methylthiazole + ATP = 4-methyl-5-(2-phosphooxyethyl)-thiazole + ADP + H(+). The protein operates within cofactor biosynthesis; thiamine diphosphate biosynthesis; 4-methyl-5-(2-phosphoethyl)-thiazole from 5-(2-hydroxyethyl)-4-methylthiazole: step 1/1. In terms of biological role, catalyzes the phosphorylation of the hydroxyl group of 4-methyl-5-beta-hydroxyethylthiazole (THZ). This Moorella thermoacetica (strain ATCC 39073 / JCM 9320) protein is Hydroxyethylthiazole kinase.